We begin with the raw amino-acid sequence, 743 residues long: Protein STB5 (743 aa).

A DNA-binding region (zn(2)-C6 fungal-type) is located at residues 22-49 (CARCRKLKKKCGKQIPTCANCDKNGAHC). Disordered regions lie at residues 81–100 (VGKS…PLSA) and 155–249 (NSNP…YANN). Polar residues-rich tracts occupy residues 85–99 (PLST…SPLS) and 155–198 (NSNP…SPLI). Residues 213–238 (NNNRNTSNGDNGSNVNHDNNNGSTNT) show a composition bias toward low complexity. Residues 239-249 (PQLSLTPYANN) show a composition bias toward polar residues.

It is found in the nucleus. In terms of biological role, binds to SIN3. This chain is Protein STB5 (STB5), found in Saccharomyces cerevisiae (strain ATCC 204508 / S288c) (Baker's yeast).